We begin with the raw amino-acid sequence, 618 residues long: Kelch-like protein 40b (618 aa).

The 68-residue stretch at 33 to 100 (VDCVLKIKDK…LYTSNINVTE (68 aa)) folds into the BTB domain. The 103-residue stretch at 135 to 237 (CLAIFRLGLM…PRDYFVKNVE (103 aa)) folds into the BACK domain. The segment covering 264-284 (PELKKTKNKKSPSEEGQKKGD) has biased composition (basic and acidic residues). The segment at 264-297 (PELKKTKNKKSPSEEGQKKGDEEEVEEEEEQEER) is disordered. Residues 285–295 (EEEVEEEEEQE) show a composition bias toward acidic residues. Kelch repeat units follow at residues 356 to 408 (QIFV…EAEN), 409 to 458 (FIFV…SHNE), 459 to 506 (MIYV…IHKN), 508 to 553 (IYVV…SVSG), and 555 to 608 (LYAV…VLGV).

The protein belongs to the KLHL40 family. Component of the BCR(KLHL40) E3 ubiquitin ligase complex. Expressed in skeletal muscle. Detected in the eye at much lower levels.

The protein resides in the cytoplasm. It is found in the myofibril. Its subcellular location is the sarcomere. The protein localises to the a band. It localises to the i band. Functionally, substrate-specific adapter of a BCR (BTB-CUL3-RBX1) E3 ubiquitin ligase complex. Required for skeletal muscle development. The chain is Kelch-like protein 40b (klhl40b) from Danio rerio (Zebrafish).